Consider the following 78-residue polypeptide: UPF0349 protein SSP1836 (78 aa).

This sequence belongs to the UPF0349 family.

This Staphylococcus saprophyticus subsp. saprophyticus (strain ATCC 15305 / DSM 20229 / NCIMB 8711 / NCTC 7292 / S-41) protein is UPF0349 protein SSP1836.